A 172-amino-acid chain; its full sequence is 3-phenylpropionate/cinnamic acid dioxygenase subunit beta (172 aa).

Belongs to the bacterial ring-hydroxylating dioxygenase beta subunit family. As to quaternary structure, this dioxygenase system consists of four proteins: the two subunits of the hydroxylase component (HcaE and HcaF), a ferredoxin (HcaC) and a ferredoxin reductase (HcaD).

It carries out the reaction 3-phenylpropanoate + NADH + O2 + H(+) = 3-(cis-5,6-dihydroxycyclohexa-1,3-dien-1-yl)propanoate + NAD(+). It catalyses the reaction (E)-cinnamate + NADH + O2 + H(+) = (2E)-3-(cis-5,6-dihydroxycyclohexa-1,3-dien-1-yl)prop-2-enoate + NAD(+). The protein operates within aromatic compound metabolism; 3-phenylpropanoate degradation. In terms of biological role, part of the multicomponent 3-phenylpropionate dioxygenase. Converts 3-phenylpropionic acid (PP) and cinnamic acid (CI) into 3-phenylpropionate-dihydrodiol (PP-dihydrodiol) and cinnamic acid-dihydrodiol (CI-dihydrodiol), respectively. This Shigella sonnei (strain Ss046) protein is 3-phenylpropionate/cinnamic acid dioxygenase subunit beta.